A 235-amino-acid chain; its full sequence is Segregation and condensation protein A (235 aa).

It belongs to the ScpA family. As to quaternary structure, component of a cohesin-like complex composed of ScpA, ScpB and the Smc homodimer, in which ScpA and ScpB bind to the head domain of Smc. The presence of the three proteins is required for the association of the complex with DNA.

Its subcellular location is the cytoplasm. Functionally, participates in chromosomal partition during cell division. May act via the formation of a condensin-like complex containing Smc and ScpB that pull DNA away from mid-cell into both cell halves. The chain is Segregation and condensation protein A from Streptococcus equi subsp. zooepidemicus (strain H70).